The primary structure comprises 371 residues: DNA primase DnaG (371 aa).

The 76-residue stretch at 173 to 248 folds into the Toprim domain; the sequence is DEIILVEGRA…DIDYVAVAPP (76 aa). 3 residues coordinate Mg(2+): E179, D221, and D223.

This sequence belongs to the archaeal DnaG primase family. In terms of assembly, forms a ternary complex with MCM helicase and DNA. Component of the archaeal exosome complex. Mg(2+) serves as cofactor.

The enzyme catalyses ssDNA + n NTP = ssDNA/pppN(pN)n-1 hybrid + (n-1) diphosphate.. RNA polymerase that catalyzes the synthesis of short RNA molecules used as primers for DNA polymerase during DNA replication. Also part of the exosome, which is a complex involved in RNA degradation. Acts as a poly(A)-binding protein that enhances the interaction between heteromeric, adenine-rich transcripts and the exosome. The protein is DNA primase DnaG of Nanoarchaeum equitans (strain Kin4-M).